We begin with the raw amino-acid sequence, 336 residues long: Tyrosine phosphatase-like protein H1 (336 aa).

A Tyrosine-protein phosphatase domain is found at 27–295 (IKKEHHKLMK…EICYRVLCEA (269 aa)).

It belongs to the protein-tyrosine phosphatase family.

In Microplitis demolitor (Parasitoid wasp), this protein is Tyrosine phosphatase-like protein H1 (H1).